An 892-amino-acid polypeptide reads, in one-letter code: Histone deacetylase 4 (892 aa).

Residues Asn-145–Ser-225 are disordered. Composition is skewed to polar residues over residues Ser-171 to Leu-192 and Glu-208 to His-222. Positions Ser-481–Asp-822 are histone deacetylase. The active site involves His-628.

The protein belongs to the histone deacetylase family. HD type 2 subfamily.

It localises to the nucleus. The catalysed reaction is N(6)-acetyl-L-lysyl-[histone] + H2O = L-lysyl-[histone] + acetate. In terms of biological role, responsible for the deacetylation of lysine residues on the N-terminal part of the core histones (H2A, H2B, H3 and H4). Histone deacetylation gives a tag for epigenetic repression and plays an important role in transcriptional regulation, cell cycle progression and developmental events. Histone deacetylases act via the formation of large multiprotein complexes. This Caenorhabditis briggsae protein is Histone deacetylase 4 (hda-4).